A 597-amino-acid chain; its full sequence is Probable methyltransferase-like protein 25 (597 aa).

Basic and acidic residues predominate over residues 245–254; it reads ECKGDAESVQ. 2 disordered regions span residues 245–265 and 317–342; these read ECKG…DLSA and TSSQ…KARD. Residues 317-326 show a composition bias toward polar residues; it reads TSSQVQNTEK.

Functionally, probable methyltransferase. In Mus musculus (Mouse), this protein is Probable methyltransferase-like protein 25 (Mettl25).